Reading from the N-terminus, the 154-residue chain is NADPH-dependent 7-cyano-7-deazaguanine reductase (154 aa).

The Thioimide intermediate role is filled by cysteine 52. Catalysis depends on aspartate 59, which acts as the Proton donor. Substrate contacts are provided by residues 74-76 (VES) and 93-94 (HE).

This sequence belongs to the GTP cyclohydrolase I family. QueF type 1 subfamily.

Its subcellular location is the cytoplasm. It catalyses the reaction 7-aminomethyl-7-carbaguanine + 2 NADP(+) = 7-cyano-7-deazaguanine + 2 NADPH + 3 H(+). It functions in the pathway tRNA modification; tRNA-queuosine biosynthesis. In terms of biological role, catalyzes the NADPH-dependent reduction of 7-cyano-7-deazaguanine (preQ0) to 7-aminomethyl-7-deazaguanine (preQ1). This is NADPH-dependent 7-cyano-7-deazaguanine reductase from Ruegeria sp. (strain TM1040) (Silicibacter sp.).